Consider the following 396-residue polypeptide: Elongation factor Tu 1 (396 aa).

Residues 10-206 enclose the tr-type G domain; it reads KPHVNVGTIG…ALDTYIPTPE (197 aa). The segment at 19–26 is G1; sequence GHVDHGKT. 19–26 is a GTP binding site; that stretch reads GHVDHGKT. Mg(2+) is bound at residue Thr26. Positions 60–64 are G2; the sequence is GITIN. A G3 region spans residues 81–84; sequence DCPG. GTP contacts are provided by residues 81-85 and 136-139; these read DCPGH and NKCD. The tract at residues 136–139 is G4; the sequence is NKCD. The tract at residues 174–176 is G5; the sequence is SAK.

It belongs to the TRAFAC class translation factor GTPase superfamily. Classic translation factor GTPase family. EF-Tu/EF-1A subfamily. Monomer.

It localises to the cytoplasm. The enzyme catalyses GTP + H2O = GDP + phosphate + H(+). Its function is as follows. GTP hydrolase that promotes the GTP-dependent binding of aminoacyl-tRNA to the A-site of ribosomes during protein biosynthesis. The polypeptide is Elongation factor Tu 1 (Acidovorax sp. (strain JS42)).